Here is a 151-residue protein sequence, read N- to C-terminus: Large ribosomal subunit protein uL15 (151 aa).

Residues 37-57 (GMRGQKSRSGRPTRPGFEGGQ) are disordered.

This sequence belongs to the universal ribosomal protein uL15 family. As to quaternary structure, part of the 50S ribosomal subunit.

Binds to the 23S rRNA. The sequence is that of Large ribosomal subunit protein uL15 from Prochlorococcus marinus (strain MIT 9313).